Consider the following 184-residue polypeptide: (2E)-enoyl-[ACP] glycyltransferase (184 aa).

It belongs to the FcoT family.

It catalyses the reaction a (3R)-3-[(carboxymethyl)amino]fatty acid + holo-[ACP] + H(+) = a (2E)-enoyl-[ACP] + glycine + H2O. It carries out the reaction (3R)-3-[(carboxylmethyl)amino]decanoate + holo-[ACP] + H(+) = (2E)-decenoyl-[ACP] + glycine + H2O. Functionally, involved in the biosynthesis of a unique class of isonitrile lipopeptides (INLPs) that seem to play a role in metal acquisition in M.marinum. Catalyzes a Michael addition of glycine to the beta-position of an alpha,beta-unsaturated fatty acyl-[ACP], producing a (3R)-3-[(carboxymethyl)amino]fatty acid. Acts on the (2E)-decenoyl moiety loaded on the acyl-carrier protein MmaB, forming the product (3R)-3-[(carboxymethyl)amino]decanoate released from MmaB. This is (2E)-enoyl-[ACP] glycyltransferase from Mycobacterium marinum (strain ATCC BAA-535 / M).